We begin with the raw amino-acid sequence, 496 residues long: NADP-dependent glyceraldehyde-3-phosphate dehydrogenase (496 aa).

Substrate is bound by residues Arg116 and 169-170 (NY). Residues Lys192, Thr195, and Asp230 each coordinate NADP(+). NAD(+) is bound at residue 245–249 (GGDTG). Glu264 acts as the Proton acceptor in catalysis. 297–299 (RCT) is a binding site for substrate. Cys298 (nucleophile) is an active-site residue. Glu391 contributes to the NADP(+) binding site. Arg451 serves as a coordination point for substrate.

The protein belongs to the aldehyde dehydrogenase family.

The protein resides in the cytoplasm. Its subcellular location is the cytosol. The enzyme catalyses D-glyceraldehyde 3-phosphate + NADP(+) + H2O = (2R)-3-phosphoglycerate + NADPH + 2 H(+). With respect to regulation, competitive inhibition by NADPH, 3-phospho-D-glycerate and ATP. Important as a means of generating NADPH for biosynthetic reactions. May be a main source of cytosolic NADPH for mannitol biosynthesis in leaves. This is NADP-dependent glyceraldehyde-3-phosphate dehydrogenase from Apium graveolens (Celery).